The primary structure comprises 184 residues: Shikimate kinase (184 aa).

ATP is bound at residue 12–17 (GSGKST). Ser-16 is a binding site for Mg(2+). Residues Asp-34, Arg-58, and Gly-80 each contribute to the substrate site. Position 117 (Arg-117) interacts with ATP. Arg-136 provides a ligand contact to substrate. Arg-153 contacts ATP. Residues 163 to 184 (MSRLDDPTPNTSPSSTASGAAT) form a disordered region. The span at 169–184 (PTPNTSPSSTASGAAT) shows a compositional bias: low complexity.

It belongs to the shikimate kinase family. Monomer. The cofactor is Mg(2+).

It localises to the cytoplasm. The catalysed reaction is shikimate + ATP = 3-phosphoshikimate + ADP + H(+). Its pathway is metabolic intermediate biosynthesis; chorismate biosynthesis; chorismate from D-erythrose 4-phosphate and phosphoenolpyruvate: step 5/7. Its function is as follows. Catalyzes the specific phosphorylation of the 3-hydroxyl group of shikimic acid using ATP as a cosubstrate. The sequence is that of Shikimate kinase from Mycobacterium marinum (strain ATCC BAA-535 / M).